A 374-amino-acid polypeptide reads, in one-letter code: Alginate lyase (374 aa).

The N-terminal stretch at 1 to 23 (MHKTRLALSCLLGSLLLSGAVHA) is a signal peptide. Substrate-binding positions include 62–63 (SK), 135–136 (HT), and Y253.

The protein belongs to the polysaccharide lyase 5 family.

The protein resides in the periplasm. It catalyses the reaction Eliminative cleavage of alginate to give oligosaccharides with 4-deoxy-alpha-L-erythro-hex-4-enuronosyl groups at their non-reducing ends and beta-D-mannuronate at their reducing end.. Functionally, catalyzes the depolymerization of alginate by cleaving the beta-1,4 glycosidic bond between two adjacent sugar residues via a beta-elimination mechanism. May serve to degrade mislocalized alginate that is trapped in the periplasmic space. The sequence is that of Alginate lyase from Azotobacter vinelandii (strain DJ / ATCC BAA-1303).